The chain runs to 178 residues: Large ribosomal subunit protein uL10 (178 aa).

Belongs to the universal ribosomal protein uL10 family. In terms of assembly, part of the ribosomal stalk of the 50S ribosomal subunit. The N-terminus interacts with L11 and the large rRNA to form the base of the stalk. The C-terminus forms an elongated spine to which L12 dimers bind in a sequential fashion forming a multimeric L10(L12)X complex.

Functionally, forms part of the ribosomal stalk, playing a central role in the interaction of the ribosome with GTP-bound translation factors. This is Large ribosomal subunit protein uL10 from Mycobacterium tuberculosis (strain ATCC 25177 / H37Ra).